Here is a 138-residue protein sequence, read N- to C-terminus: Basic phospholipase A2 trimucrotoxin (138 aa).

Residues 1-16 form the signal peptide; it reads MRTLWIVAVLLLGVEG. Cystine bridges form between cysteine 42-cysteine 131, cysteine 44-cysteine 60, cysteine 59-cysteine 111, cysteine 65-cysteine 138, cysteine 66-cysteine 104, cysteine 73-cysteine 97, and cysteine 91-cysteine 102. Positions 43, 45, and 47 each coordinate Ca(2+). Histidine 63 is an active-site residue. Aspartate 64 is a Ca(2+) binding site. Aspartate 105 is a catalytic residue.

Belongs to the phospholipase A2 family. Group II subfamily. D49 sub-subfamily. As to quaternary structure, homodimer. The cofactor is Ca(2+). In terms of tissue distribution, expressed by the venom gland.

It localises to the secreted. The catalysed reaction is a 1,2-diacyl-sn-glycero-3-phosphocholine + H2O = a 1-acyl-sn-glycero-3-phosphocholine + a fatty acid + H(+). Snake venom phospholipase A2 (PLA2) that displays edema-inducing activities, as well as presynaptic neurotoxicity and low myotoxicity. PLA2 catalyzes the calcium-dependent hydrolysis of the 2-acyl groups in 3-sn-phosphoglycerides. This Protobothrops mucrosquamatus (Taiwan habu) protein is Basic phospholipase A2 trimucrotoxin.